Here is a 757-residue protein sequence, read N- to C-terminus: Xaa-Pro dipeptidyl-peptidase (757 aa).

Active-site charge relay system residues include Ser-348, Asp-468, and His-498.

Belongs to the peptidase S15 family. In terms of assembly, homodimer.

It is found in the cytoplasm. The catalysed reaction is Hydrolyzes Xaa-Pro-|- bonds to release unblocked, N-terminal dipeptides from substrates including Ala-Pro-|-p-nitroanilide and (sequentially) Tyr-Pro-|-Phe-Pro-|-Gly-Pro-|-Ile.. Removes N-terminal dipeptides sequentially from polypeptides having unsubstituted N-termini provided that the penultimate residue is proline. The protein is Xaa-Pro dipeptidyl-peptidase of Streptococcus pneumoniae (strain Hungary19A-6).